The primary structure comprises 141 residues: Galactose-6-phosphate isomerase subunit LacA (141 aa).

The protein belongs to the LacAB/RpiB family. Heteromultimeric protein consisting of LacA and LacB.

It carries out the reaction aldehydo-D-galactose 6-phosphate = keto-D-tagatose 6-phosphate. Its pathway is carbohydrate metabolism; D-galactose 6-phosphate degradation; D-tagatose 6-phosphate from D-galactose 6-phosphate: step 1/1. The sequence is that of Galactose-6-phosphate isomerase subunit LacA from Streptococcus equi subsp. zooepidemicus (strain MGCS10565).